We begin with the raw amino-acid sequence, 333 residues long: Cell division protein FtsQ (333 aa).

The segment at 1–99 (MTGTGPHGDP…ARREAKRRAV (99 aa)) is disordered. The Cytoplasmic portion of the chain corresponds to 1–118 (MTGTGPHGDP…VPRNTIRGLK (118 aa)). A compositionally biased stretch (acidic residues) spans 11-22 (AEDPAGPDDTAA). Residues 44–57 (TTETTAQTGTTAEA) show a composition bias toward low complexity. Residues 73–92 (ERAERRAARDRAMAIEQARR) show a composition bias toward basic and acidic residues. The chain crosses the membrane as a helical span at residues 119–139 (VLMWAALVSVLAVALGLLLYF). Topologically, residues 140–333 (TPIMSARNVE…VSSPDLPTVK (194 aa)) are extracellular. In terms of domain architecture, POTRA spans 143–211 (MSARNVEVSG…STLKISIVER (69 aa)).

This sequence belongs to the FtsQ/DivIB family. FtsQ subfamily.

The protein resides in the cell membrane. Functionally, essential cell division protein. In Mycolicibacterium smegmatis (strain ATCC 700084 / mc(2)155) (Mycobacterium smegmatis), this protein is Cell division protein FtsQ.